A 632-amino-acid polypeptide reads, in one-letter code: Probable potassium transport system protein Kup 1 (632 aa).

12 consecutive transmembrane segments (helical) span residues 19–39, 59–79, 110–130, 146–166, 178–198, 213–233, 256–276, 298–318, 346–366, 373–393, 403–423, and 428–448; these read LVLG…LYAL, VISM…VVFV, VLMM…VITP, PQLS…LFLI, FGPI…LHLV, ITFL…VFLV, WFVL…AMLL, MVLL…SGAF, IYLP…VISF, AAAY…LAAV, PALV…FFAA, and VAEG…LLMT.

It belongs to the HAK/KUP transporter (TC 2.A.72) family.

Its subcellular location is the cell inner membrane. The enzyme catalyses K(+)(in) + H(+)(in) = K(+)(out) + H(+)(out). In terms of biological role, transport of potassium into the cell. Likely operates as a K(+):H(+) symporter. This is Probable potassium transport system protein Kup 1 from Cupriavidus necator (strain ATCC 17699 / DSM 428 / KCTC 22496 / NCIMB 10442 / H16 / Stanier 337) (Ralstonia eutropha).